A 428-amino-acid chain; its full sequence is Nuclear hormone receptor family member nhr-44 (428 aa).

The segment at residues 21–98 (SEKCLVCFQP…LGMKPDNIQR (78 aa)) is a DNA-binding region (nuclear receptor). NR C4-type zinc fingers lie at residues 24–44 (CLVCFQPSHGNHFGVDSCRAC) and 61–86 (CREGDNKCTPDEWGRWSCKRCRSDKC). The 247-residue stretch at 181-427 (SLEQLAFGLQ…LSHPEMFQFS (247 aa)) folds into the NR LBD domain.

The protein belongs to the nuclear hormone receptor family.

The protein localises to the nucleus. Functionally, orphan nuclear receptor. This is Nuclear hormone receptor family member nhr-44 (nhr-44) from Caenorhabditis elegans.